The sequence spans 175 residues: E1B protein, small T-antigen (175 aa).

A disordered region spans residues L153–A175.

It belongs to the adenoviridae E1B 19 kDa protein family.

This is E1B protein, small T-antigen from Mus musculus (Mouse).